Here is a 1536-residue protein sequence, read N- to C-terminus: Alpha-2-macroglobulin (1536 aa).

A signal peptide spans 1–23 (MGMKRLIFLVFLLISFSLFGGYA). Residues 919–922 (CVEQ) constitute a cross-link (isoglutamyl cysteine thioester (Cys-Gln)).

This sequence belongs to the protease inhibitor I39 (alpha-2-macroglobulin) family. Bacterial alpha-2-macroglobulin subfamily.

In terms of biological role, protects the bacterial cell from peptidases. The protein is Alpha-2-macroglobulin of Thermotoga maritima (strain ATCC 43589 / DSM 3109 / JCM 10099 / NBRC 100826 / MSB8).